The following is a 368-amino-acid chain: Caffeine synthase 3 (368 aa).

Y23 is an S-adenosyl-L-homocysteine binding site. Caffeine is bound at residue T30. C65, N70, D102, L103, S137, and F138 together coordinate S-adenosyl-L-homocysteine. Positions 155, 158, and 159 each coordinate caffeine. N176 contributes to the Mg(2+) binding site. Position 224 (R224) interacts with caffeine. Residues D262, F264, and N265 each coordinate Mg(2+). F320 serves as a coordination point for caffeine.

It belongs to the methyltransferase superfamily. Type-7 methyltransferase family. Mg(2+) is required as a cofactor.

The catalysed reaction is theobromine + S-adenosyl-L-methionine = caffeine + S-adenosyl-L-homocysteine + H(+). The enzyme catalyses 7-methylxanthine + S-adenosyl-L-methionine = theobromine + S-adenosyl-L-homocysteine + H(+). It functions in the pathway alkaloid biosynthesis. Its function is as follows. Involved in the biosynthesis of caffeine. Catalyzes the conversion of 7-methylxanthine (7mX) to theobromine and of theobromine to caffeine. In Camellia sinensis (Tea plant), this protein is Caffeine synthase 3.